Here is a 142-residue protein sequence, read N- to C-terminus: Transcriptional regulator MraZ (142 aa).

SpoVT-AbrB domains follow at residues 5–51 (ASAL…PRPE) and 77–120 (AMDV…DAQT).

The protein belongs to the MraZ family. As to quaternary structure, forms oligomers.

The protein localises to the cytoplasm. The protein resides in the nucleoid. The sequence is that of Transcriptional regulator MraZ from Paraburkholderia phytofirmans (strain DSM 17436 / LMG 22146 / PsJN) (Burkholderia phytofirmans).